The primary structure comprises 598 residues: MALRCPIVSVLGHVDHGKTSLLDKIRSTRVTQREAGGITQHIGASEIPINTIKKVSKDLLGLFKADLTIPGLLVIDTPGHEAFTSLRKRGGALADIAILVVDMNEGFKPQTIEAINILKQCKTPFIVAANKLDRVPGWNSKEGPFILNFNEKNQHPNAMTEFEIRLYENVIKHLNELGFDADLFSRVKDTTKTINVVPVSAMTGEGIPDLLVIISGLAQKFLEQKLALNVEGYAKGTVLELKEEKGLGKTIDAIIYDGIAKTGDFLVVGNPQGVLVSKIKALLKPKELDEMRDPKDKFKPSKQISAATGVKISAPDLDNVIAGSPLRIVPKDQIENAKAEVLQEVEEFTILTDDEGIIIKADTMGSLEALANELRKVKAKIKKAEVGDISKKDVIEASSYASTNPLNGLIISFNTKVLSDAKAEIEKSDVKLLEGRIIYKLVEEYEEWVKEMEELMKSDEINRLTKPAMIKILPNCIFRQKEPAVCGVEVLYGTLKIGSPLMSEDGKKLGYVKEIRDNQQENIKEAKVGMQVPVSIDGNIVLGRNAKENDILYVEVPEPEARKLHHEFRDELRGDEKEALSRYMELKQKIENNIFWGM.

The tr-type G domain occupies 3–225 (LRCPIVSVLG…GLAQKFLEQK (223 aa)). Residues 12–19 (GHVDHGKT) are G1. GTP is bound at residue 12–19 (GHVDHGKT). The interval 37-41 (GITQH) is G2. The G3 stretch occupies residues 76-79 (DTPG). GTP-binding positions include 76 to 80 (DTPGH) and 130 to 133 (NKLD). Residues 130 to 133 (NKLD) are G4. A G5 region spans residues 200–202 (SAM).

Belongs to the TRAFAC class translation factor GTPase superfamily. Classic translation factor GTPase family. IF-2 subfamily.

Its function is as follows. Function in general translation initiation by promoting the binding of the formylmethionine-tRNA to ribosomes. Seems to function along with eIF-2. In Methanococcus maripaludis (strain C6 / ATCC BAA-1332), this protein is Probable translation initiation factor IF-2.